Here is a 589-residue protein sequence, read N- to C-terminus: Protein MICRORCHIDIA 3 (589 aa).

The segment at 1 to 33 (MAPESKNAGVSVVVNLDSDSDSDNDDGVGGRGA) is disordered. Residues 542 to 589 (MRCEEYVKKETELEQTVSNLAKELEETKSKCARLALLVDAKRREMQQV) are a coiled coil.

This sequence belongs to the MORC ATPase protein family. In terms of assembly, homodimer and heterodimer. Component of an RNA-directed DNA methylation (RdDM) complex. It depends on Mg(2+) as a cofactor. Requires Mn(2+) as cofactor.

It is found in the nucleus. Functionally, exhibits ATPase activity. Binds DNA/RNA in a non-specific manner and exhibits endonuclease activity. Probably involved in DNA repair. Involved in RNA-directed DNA methylation (RdDM) as a component of the RdDM machinery and required for gene silencing. May also be involved in the regulation of chromatin architecture to maintain gene silencing. The protein is Protein MICRORCHIDIA 3 of Arabidopsis thaliana (Mouse-ear cress).